An 835-amino-acid polypeptide reads, in one-letter code: Protein translocase subunit SecA (835 aa).

Residues glutamine 85, 103-107 (GEGKT), and aspartate 492 contribute to the ATP site. The disordered stretch occupies residues 788–807 (VQGEAVHPSSDGEEAKKKPV). Zn(2+) is bound by residues cysteine 819, cysteine 821, cysteine 830, and cysteine 831.

The protein belongs to the SecA family. As to quaternary structure, monomer and homodimer. Part of the essential Sec protein translocation apparatus which comprises SecA, SecYEG and auxiliary proteins SecDF. Other proteins may also be involved. Requires Zn(2+) as cofactor.

The protein localises to the cell membrane. The protein resides in the cytoplasm. It carries out the reaction ATP + H2O + cellular proteinSide 1 = ADP + phosphate + cellular proteinSide 2.. Functionally, part of the Sec protein translocase complex. Interacts with the SecYEG preprotein conducting channel. Has a central role in coupling the hydrolysis of ATP to the transfer of proteins into and across the cell membrane, serving as an ATP-driven molecular motor driving the stepwise translocation of polypeptide chains across the membrane. The protein is Protein translocase subunit SecA of Bacillus cereus (strain B4264).